A 241-amino-acid polypeptide reads, in one-letter code: Small ribosomal subunit protein bS6 (241 aa).

A compositionally biased stretch (basic residues) spans 97-108 (KPKIRERNRKYT). Residues 97–241 (KPKIRERNRK…YNNKKPQSSN (145 aa)) are disordered. Over residues 109–118 (PRRDRFEKPN) the composition is skewed to basic and acidic residues. Composition is skewed to low complexity over residues 130 to 151 (QDQQATKNQQNFQQNQQNQTSQ) and 161 to 182 (DDFQQVSSNQQNFGQNQQNQSG). The segment covering 189–202 (RQNQENIHQNSKNH) has biased composition (polar residues).

It belongs to the bacterial ribosomal protein bS6 family.

Its function is as follows. Binds together with bS18 to 16S ribosomal RNA. The sequence is that of Small ribosomal subunit protein bS6 from Mesomycoplasma hyopneumoniae (strain 232) (Mycoplasma hyopneumoniae).